Reading from the N-terminus, the 166-residue chain is uncharacterized protein (166 aa).

The protein to M.jannaschii MJ0992.

This is an uncharacterized protein from Methanocaldococcus jannaschii (strain ATCC 43067 / DSM 2661 / JAL-1 / JCM 10045 / NBRC 100440) (Methanococcus jannaschii).